A 189-amino-acid polypeptide reads, in one-letter code: MKKTLMAVGLAAVISIPFAANAADYVIDTKGAHASINFKVNHLGYSYIKGRFNKFDGEFSYDPANIAASSVVVNVDTRSLDSNHAERDKHIRSADFIDASKYSTATFKSTEVVDKGNGQLEVKGDLTLHGQTKPIVINAEFIGAGQDPWGGQRAGFAGTTRLELKDFGIQVMGASSYVDMELHVEGVQK.

An N-terminal signal peptide occupies residues 1–22 (MKKTLMAVGLAAVISIPFAANA).

The protein belongs to the UPF0312 family. Type 1 subfamily.

It localises to the periplasm. The sequence is that of UPF0312 protein VC0395_0473/VC395_A0785 from Vibrio cholerae serotype O1 (strain ATCC 39541 / Classical Ogawa 395 / O395).